The sequence spans 181 residues: Nedd8-conjugating enzyme UbcE2M (181 aa).

Interaction with Uba3 stretches follow at residues 4 to 7 and 24 to 54; these read LFTL and ASAA…PNDL. Residues 26-170 enclose the UBC core domain; it reads AAQLRIQKDI…VKKAMRGGCV (145 aa). Cysteine 108 functions as the Glycyl thioester intermediate in the catalytic mechanism.

It belongs to the ubiquitin-conjugating enzyme family. UBC12 subfamily. As to quaternary structure, interacts with Uba3. Expressed in the wing disk.

It catalyses the reaction [E1 NEDD8-activating enzyme]-S-[NEDD8 protein]-yl-L-cysteine + [E2 NEDD8-conjugating enzyme]-L-cysteine = [E1 NEDD8-activating enzyme]-L-cysteine + [E2 NEDD8-conjugating enzyme]-S-[NEDD8-protein]-yl-L-cysteine.. It functions in the pathway protein modification; protein neddylation. Its function is as follows. Accepts the ubiquitin-like protein Nedd8 from the Uba3-APP-BP1 E1 complex and catalyzes its covalent attachment to other proteins. Required for Cul1 and Cul3 neddylation. Negatively regulates full-length ci stability and hedgehog signaling. This Drosophila melanogaster (Fruit fly) protein is Nedd8-conjugating enzyme UbcE2M.